The sequence spans 111 residues: Flagellar hook-basal body complex protein FliE (111 aa).

It belongs to the FliE family.

It localises to the bacterial flagellum basal body. This chain is Flagellar hook-basal body complex protein FliE, found in Brucella abortus (strain S19).